Reading from the N-terminus, the 625-residue chain is MATQKQEKSVIWDWLTTVDHKKIAIMYLIAGTLFFVKAGVMALFMRIQLMYPEMNFLSGQTFNEFITMHGTIMLFLAATPLLFAFMNYVIPLQIGARDVAFPFVNALGFWIFFFGGLLLSLSWFFGGGPDAGWTAYVPLSSRDYGGLGIDFYVLGLQVSGIGTLISAINFLVTIVNMRAPGMTMMRLPLFVWTSFISSTLILFAFTPLAAGLALLMLDRLFEAQYFIPSMGGNVVLWQHIFWIFGHPEVYILVLPAFGIISEVIPAFSRKRLFGYTAMVFATMIIAFLGFMVWAHHMFTVGMGPVANSIFAVATMTIAVPTGIKIFNWLFTMWGGKITFNTAMLFASSFVPTFVLGGVTGVMLAMAPVDYLYHDTYFVVAHFHYIIVGGIVLSLFAGLFYWYPKMFGHMLNETLGKLFFWVFYIGFHLTFFVQHLLGLMGMPRRVYTYLGDQGLDAFNFISTIGTFFMSAGVILLVINVIYSAFKGERVTVADPWDARTLEWATPTPVPEYNFAQTPQVRSLDPLFYEKIHGDGTMKPAEPVTDIHMPNGSILPFIMSIGLFFAGFGLIMLNMDNPIINPWIVAIGGLALTFGCMFVRSIKEDHGYHIPAEQVKADLAELKKGGN.

The chain crosses the membrane as a helical span at residues 23–43; that stretch reads IAIMYLIAGTLFFVKAGVMAL. His69 serves as a coordination point for Fe(II)-heme a. The next 6 helical transmembrane spans lie at 72-92, 99-119, 151-171, 195-215, 240-260, and 272-292; these read IMLF…VIPL, VAFP…GLLL, FYVL…INFL, FISS…LALL, IFWI…FGII, and LFGY…GFMV. Cu cation contacts are provided by His246 and Tyr250. Residues 246–250 constitute a cross-link (1'-histidyl-3'-tyrosine (His-Tyr)); it reads HPEVY. Residues His295 and His296 each contribute to the Cu cation site. 2 helical membrane-spanning segments follow: residues 309 to 329 and 343 to 363; these read IFAV…FNWL and MLFA…GVML. A heme a3-binding site is contributed by His381. 5 consecutive transmembrane segments (helical) span residues 382-402, 417-437, 460-480, 551-571, and 577-597; these read FHYI…FYWY, LFFW…HLLG, ISTI…INVI, SILP…LIML, and IINP…CMFV. A Fe(II)-heme a-binding site is contributed by His383.

This sequence belongs to the heme-copper respiratory oxidase family.

The protein localises to the cell membrane. It carries out the reaction 4 Fe(II)-[cytochrome c] + O2 + 8 H(+)(in) = 4 Fe(III)-[cytochrome c] + 2 H2O + 4 H(+)(out). The protein operates within energy metabolism; oxidative phosphorylation. Cytochrome c oxidase is the component of the respiratory chain that catalyzes the reduction of oxygen to water. Subunits 1-3 form the functional core of the enzyme complex. CO I is the catalytic subunit of the enzyme. Electrons originating in cytochrome c are transferred via the copper A center of subunit 2 and heme A of subunit 1 to the bimetallic center formed by heme A3 and copper B. The protein is Cytochrome c oxidase subunit 1 (ctaD) of Alkalihalophilus pseudofirmus (strain ATCC BAA-2126 / JCM 17055 / OF4) (Bacillus pseudofirmus).